Reading from the N-terminus, the 160-residue chain is uncharacterized protein (160 aa).

The N-acetyltransferase domain maps to 2–140 (MIIIPNNEIA…KARRLKPEIP (139 aa)).

This is an uncharacterized protein from Bacillus subtilis (strain 168).